An 81-amino-acid polypeptide reads, in one-letter code: Photosystem I iron-sulfur center (81 aa).

2 consecutive 4Fe-4S ferredoxin-type domains span residues 2–31 (AHSV…MIPW) and 39–68 (IASA…VRVY). Residues Cys-11, Cys-14, Cys-17, Cys-21, Cys-48, Cys-51, Cys-54, and Cys-58 each contribute to the [4Fe-4S] cluster site.

The eukaryotic PSI reaction center is composed of at least 11 subunits. [4Fe-4S] cluster serves as cofactor.

The protein localises to the plastid. Its subcellular location is the chloroplast thylakoid membrane. The catalysed reaction is reduced [plastocyanin] + hnu + oxidized [2Fe-2S]-[ferredoxin] = oxidized [plastocyanin] + reduced [2Fe-2S]-[ferredoxin]. Apoprotein for the two 4Fe-4S centers FA and FB of photosystem I (PSI); essential for photochemical activity. FB is the terminal electron acceptor of PSI, donating electrons to ferredoxin. The C-terminus interacts with PsaA/B/D and helps assemble the protein into the PSI complex. Required for binding of PsaD and PsaE to PSI. PSI is a plastocyanin-ferredoxin oxidoreductase, converting photonic excitation into a charge separation, which transfers an electron from the donor P700 chlorophyll pair to the spectroscopically characterized acceptors A0, A1, FX, FA and FB in turn. The chain is Photosystem I iron-sulfur center from Pinus thunbergii (Japanese black pine).